The chain runs to 382 residues: Chaperone protein DnaJ (382 aa).

The J domain occupies 5–70 (DYYETLGVSR…NKRAAYDRYG (66 aa)). The CR-type zinc finger occupies 140–218 (GKTAQIRVPT…CHGQGRITEE (79 aa)). Zn(2+)-binding residues include Cys153, Cys156, Cys170, Cys173, Cys192, Cys195, Cys206, and Cys209. CXXCXGXG motif repeat units follow at residues 153 to 160 (CDVCSGSG), 170 to 177 (CGTCQGSG), 192 to 199 (CPTCHGRG), and 206 to 213 (CGKCHGQG).

This sequence belongs to the DnaJ family. Homodimer. The cofactor is Zn(2+).

Its subcellular location is the cytoplasm. In terms of biological role, participates actively in the response to hyperosmotic and heat shock by preventing the aggregation of stress-denatured proteins and by disaggregating proteins, also in an autonomous, DnaK-independent fashion. Unfolded proteins bind initially to DnaJ; upon interaction with the DnaJ-bound protein, DnaK hydrolyzes its bound ATP, resulting in the formation of a stable complex. GrpE releases ADP from DnaK; ATP binding to DnaK triggers the release of the substrate protein, thus completing the reaction cycle. Several rounds of ATP-dependent interactions between DnaJ, DnaK and GrpE are required for fully efficient folding. Also involved, together with DnaK and GrpE, in the DNA replication of plasmids through activation of initiation proteins. The chain is Chaperone protein DnaJ from Rhizobium rhizogenes (strain K84 / ATCC BAA-868) (Agrobacterium radiobacter).